Consider the following 271-residue polypeptide: Large ribosomal subunit protein uL15c (271 aa).

2 disordered regions span residues 1 to 21 (MASLLSLSSTPPSTANSNNYP) and 66 to 120 (SNVS…QKSR). A chloroplast-targeting transit peptide spans 1–61 (MASLLSLSST…KESTRLVVVA (61 aa)). A compositionally biased stretch (low complexity) spans 66–76 (SNVSPSIGSGS). Residues 91–101 (SRKKGKRKGRG) show a composition bias toward basic residues. The span at 102–114 (HAAGQGGSCGFGM) shows a compositional bias: gly residues.

As to quaternary structure, component of the chloroplast large ribosomal subunit (LSU). Mature 70S chloroplast ribosomes of higher plants consist of a small (30S) and a large (50S) subunit. The 30S small subunit contains 1 molecule of ribosomal RNA (16S rRNA) and 24 different proteins. The 50S large subunit contains 3 rRNA molecules (23S, 5S and 4.5S rRNA) and 33 different proteins.

It is found in the plastid. It localises to the chloroplast. In terms of biological role, component of the chloroplast ribosome (chloro-ribosome), a dedicated translation machinery responsible for the synthesis of chloroplast genome-encoded proteins, including proteins of the transcription and translation machinery and components of the photosynthetic apparatus. The sequence is that of Large ribosomal subunit protein uL15c (RPL15) from Spinacia oleracea (Spinach).